Reading from the N-terminus, the 147-residue chain is Prefoldin subunit alpha 2 (147 aa).

It belongs to the prefoldin subunit alpha family. In terms of assembly, heterohexamer of two alpha and four beta subunits.

It localises to the cytoplasm. Molecular chaperone capable of stabilizing a range of proteins. Seems to fulfill an ATP-independent, HSP70-like function in archaeal de novo protein folding. This Methanocaldococcus jannaschii (strain ATCC 43067 / DSM 2661 / JAL-1 / JCM 10045 / NBRC 100440) (Methanococcus jannaschii) protein is Prefoldin subunit alpha 2 (pfdA2).